A 205-amino-acid chain; its full sequence is Small ribosomal subunit protein uS4 (205 aa).

A compositionally biased stretch (basic and acidic residues) spans 1-16 (MSKRESSKYKIDRRMG). Residues 1-46 (MSKRESSKYKIDRRMGENIWGRPKSPVNRREYGPGQHGQRRKGKLS) are disordered. The region spanning 94-157 (SRLDAIVYRA…KQLVTVLEAV (64 aa)) is the S4 RNA-binding domain.

Belongs to the universal ribosomal protein uS4 family. Part of the 30S ribosomal subunit. Contacts protein S5. The interaction surface between S4 and S5 is involved in control of translational fidelity.

In terms of biological role, one of the primary rRNA binding proteins, it binds directly to 16S rRNA where it nucleates assembly of the body of the 30S subunit. Its function is as follows. With S5 and S12 plays an important role in translational accuracy. The sequence is that of Small ribosomal subunit protein uS4 from Rhizobium etli (strain ATCC 51251 / DSM 11541 / JCM 21823 / NBRC 15573 / CFN 42).